A 488-amino-acid chain; its full sequence is Surface lipoprotein assembly modifier 1 (488 aa).

Residues 1–31 form the signal peptide; the sequence is MVIFYFCGKTFMPARNRWMLLLPLLASAAYA. Residues 32 to 202 form an N-terminal domain region; sequence EETPREPDLR…LYRKALRERD (171 aa). TPR repeat units lie at residues 118–151 and 171–204; these read MLAL…QPDA and AADQ…RDAW. A C-terminal probable beta barrel, partially restores export of lipoproteins region spans residues 203 to 488; that stretch reads AWKVNGGFSV…RAFVEFNKTF (286 aa). The next 14 beta stranded transmembrane spans lie at 204–214, 241–252, 257–267, 280–291, 294–304, 316–325, 330–340, 354–364, 368–377, 393–402, 407–417, 439–448, 455–464, and 478–488; these read WKVNGGFSVTR, VNYRLGAEKKWS, WYTTAGGDVSG, TAGVSGGIGFAD, KDAGLAVFHER, NGARLYFNRW, WQTLSSAEWGR, LQISNSLVFYR, QYWMGGLDFY, GLRFAWGQEW, LSSLLRLGAAK, LNTSLSLWHR, ITPRLTLSHR, and NRAFVEFNKTF.

Belongs to the Slam family. As to quaternary structure, interacts with the C-terminal domain of surface lipoprotein TbpB.

It is found in the cell outer membrane. Required for correct export to the cell surface of some cell outer membrane lipoproteins both in Neisseria and heterologously in E.coli. The polypeptide is Surface lipoprotein assembly modifier 1 (Neisseria meningitidis serogroup B (strain ATCC BAA-335 / MC58)).